The following is a 382-amino-acid chain: Lipid-A-disaccharide synthase (382 aa).

Belongs to the LpxB family.

The enzyme catalyses a lipid X + a UDP-2-N,3-O-bis[(3R)-3-hydroxyacyl]-alpha-D-glucosamine = a lipid A disaccharide + UDP + H(+). It participates in bacterial outer membrane biogenesis; LPS lipid A biosynthesis. Condensation of UDP-2,3-diacylglucosamine and 2,3-diacylglucosamine-1-phosphate to form lipid A disaccharide, a precursor of lipid A, a phosphorylated glycolipid that anchors the lipopolysaccharide to the outer membrane of the cell. This chain is Lipid-A-disaccharide synthase, found in Alteromonas mediterranea (strain DSM 17117 / CIP 110805 / LMG 28347 / Deep ecotype).